Consider the following 88-residue polypeptide: Apolipoprotein C-I (88 aa).

Residues 1 to 26 (MRLFLSLPVLVVVLAMVLEGPAPTQA) form the signal peptide.

It belongs to the apolipoprotein C1 family.

It localises to the secreted. Inhibitor of lipoprotein binding to the low density lipoprotein (LDL) receptor, LDL receptor-related protein, and very low density lipoprotein (VLDL) receptor. Associates with high density lipoproteins (HDL) and the triacylglycerol-rich lipoproteins in the plasma and makes up about 10% of the protein of the VLDL and 2% of that of HDL. Appears to interfere directly with fatty acid uptake and is also the major plasma inhibitor of cholesteryl ester transfer protein (CETP). Binds free fatty acids and reduces their intracellular esterification. Modulates the interaction of APOE with beta-migrating VLDL and inhibits binding of beta-VLDL to the LDL receptor-related protein. The sequence is that of Apolipoprotein C-I (APOC1) from Leptonychotes weddellii (Weddell seal).